The chain runs to 198 residues: Nucleoside triphosphate pyrophosphatase 1 (198 aa).

Asp75 serves as the catalytic Proton acceptor.

This sequence belongs to the Maf family. A divalent metal cation is required as a cofactor.

It is found in the cytoplasm. The enzyme catalyses a ribonucleoside 5'-triphosphate + H2O = a ribonucleoside 5'-phosphate + diphosphate + H(+). The catalysed reaction is a 2'-deoxyribonucleoside 5'-triphosphate + H2O = a 2'-deoxyribonucleoside 5'-phosphate + diphosphate + H(+). Nucleoside triphosphate pyrophosphatase. May have a dual role in cell division arrest and in preventing the incorporation of modified nucleotides into cellular nucleic acids. This Jannaschia sp. (strain CCS1) protein is Nucleoside triphosphate pyrophosphatase 1.